The sequence spans 205 residues: Guanylate kinase (205 aa).

In terms of domain architecture, Guanylate kinase-like spans 18-196; it reads PKLFIISAPA…AYQVLRSIFI (179 aa). 25-32 serves as a coordination point for ATP; it reads APAGAGKT.

This sequence belongs to the guanylate kinase family.

It localises to the cytoplasm. It carries out the reaction GMP + ATP = GDP + ADP. Essential for recycling GMP and indirectly, cGMP. The protein is Guanylate kinase (gmk) of Chlamydia trachomatis serovar D (strain ATCC VR-885 / DSM 19411 / UW-3/Cx).